The sequence spans 448 residues: Probable D-serine dehydratase (448 aa).

An N6-(pyridoxal phosphate)lysine modification is found at K119.

The protein belongs to the serine/threonine dehydratase family. DsdA subfamily. Requires pyridoxal 5'-phosphate as cofactor.

The catalysed reaction is D-serine = pyruvate + NH4(+). The chain is Probable D-serine dehydratase from Pseudomonas paraeruginosa (strain DSM 24068 / PA7) (Pseudomonas aeruginosa (strain PA7)).